The primary structure comprises 777 residues: BRCA1-associated RING domain protein 1 (777 aa).

Residues 1–32 (MPDNRQPRNRQPRIRSGNEPRSAPAMEPDGRG) are disordered. Residues 26–119 (MEPDGRGAWA…KLRNLLHDNE (94 aa)) are interaction with BRCA1. The RING-type zinc-finger motif lies at 50–87 (CSRCTNILREPVCLGGCEHIFCSNCVSDCIGTGCPVCY). Residues lysine 160 and lysine 170 each participate in a glycyl lysine isopeptide (Lys-Gly) (interchain with G-Cter in SUMO2) cross-link. A disordered region spans residues 167-211 (PAIKKDASAQQDSYEFVSPSPPADVSERAKKASARSGKKQKKKTL). Position 186 is a phosphoserine (serine 186). Positions 197-209 (KASARSGKKQKKK) are enriched in basic residues. Position 299 is a phosphothreonine (threonine 299). The tract at residues 356 to 404 (NIPLPECSSPPSCKRKVGGTSGRKNSNMSDEFISLSPGTPPSTLSSSSY) is disordered. The segment covering 389-404 (SLSPGTPPSTLSSSSY) has biased composition (low complexity). Position 391 is a phosphoserine (serine 391). Position 394 is a phosphothreonine (threonine 394). Residue lysine 423 forms a Glycyl lysine isopeptide (Lys-Gly) (interchain with G-Cter in SUMO2) linkage. ANK repeat units follow at residues 427–459 (RGET…VKDH), 460–492 (AGWT…TTGY), and 493–525 (QNDS…AVNI). An ANK 4; degenerate repeat occupies 526-546 (FGLRPVDYTDDESMKSLLLLP). Residue lysine 548 forms a Glycyl lysine isopeptide (Lys-Gly) (interchain with G-Cter in SUMO2) linkage. The flexible linker stretch occupies residues 554 to 558 (ASHCS). BRCT domains lie at 560 to 653 (MNTG…KYEI) and 667 to 777 (LLPK…PLDS).

Homo- and heterodimer. Heterodimer (RING-type zinc finger) with BRCA1. Heterodimer (via ANK repeats and BRCT domains) with CSTF1/CSTF-50. Component of the BRCA1-A complex, at least composed of the BRCA1, BARD1, UIMC1/RAP80, ABRAXAS1, BRCC3/BRCC36, BABAM2 and BABAM1/NBA1. Interacts with UBXN1. Processed during apoptosis. The homodimer is more susceptible to proteolytic cleavage than the BARD1/BRCA1 heterodimer.

It localises to the nucleus. The enzyme catalyses S-ubiquitinyl-[E2 ubiquitin-conjugating enzyme]-L-cysteine + [acceptor protein]-L-lysine = [E2 ubiquitin-conjugating enzyme]-L-cysteine + N(6)-ubiquitinyl-[acceptor protein]-L-lysine.. It functions in the pathway protein modification; protein ubiquitination. In terms of biological role, E3 ubiquitin-protein ligase. The BRCA1-BARD1 heterodimer specifically mediates the formation of 'Lys-6'-linked polyubiquitin chains and coordinates a diverse range of cellular pathways such as DNA damage repair, ubiquitination and transcriptional regulation to maintain genomic stability. Plays a central role in the control of the cell cycle in response to DNA damage. Acts by mediating ubiquitin E3 ligase activity that is required for its tumor suppressor function. Also forms a heterodimer with CSTF1/CSTF-50 to modulate mRNA processing and RNAP II stability by inhibiting pre-mRNA 3' cleavage. The sequence is that of BRCA1-associated RING domain protein 1 (BARD1) from Homo sapiens (Human).